A 349-amino-acid chain; its full sequence is Small ribosomal subunit protein eS6 (349 aa).

The interval 224–349 (RRRSRLSSMR…AKKEKKQKKK (126 aa)) is disordered. Composition is skewed to basic and acidic residues over residues 231–251 (SMRDSRSSIGEERDKEKEKAA) and 260–334 (KKEA…EAAK).

This sequence belongs to the eukaryotic ribosomal protein eS6 family. Component of the small ribosomal subunit. Part of the small subunit (SSU) processome, composed of more than 70 proteins and the RNA chaperone small nucleolar RNA (snoRNA) U3. In terms of processing, ribosomal protein S6 is the major substrate of protein kinases in eukaryote ribosomes.

The protein localises to the cytoplasm. It localises to the nucleus. Its subcellular location is the nucleolus. Functionally, component of the 40S small ribosomal subunit. Plays an important role in controlling cell growth and proliferation through the selective translation of particular classes of mRNA. Part of the small subunit (SSU) processome, first precursor of the small eukaryotic ribosomal subunit. During the assembly of the SSU processome in the nucleolus, many ribosome biogenesis factors, an RNA chaperone and ribosomal proteins associate with the nascent pre-rRNA and work in concert to generate RNA folding, modifications, rearrangements and cleavage as well as targeted degradation of pre-ribosomal RNA by the RNA exosome. In Aedes albopictus (Asian tiger mosquito), this protein is Small ribosomal subunit protein eS6 (RpS6).